The sequence spans 565 residues: Sulfite reductase [NADPH] hemoprotein beta-component (565 aa).

[4Fe-4S] cluster-binding residues include Cys-429, Cys-435, Cys-474, and Cys-478. Cys-478 contacts siroheme.

It belongs to the nitrite and sulfite reductase 4Fe-4S domain family. As to quaternary structure, alpha(8)-beta(8). The alpha component is a flavoprotein, the beta component is a hemoprotein. Requires siroheme as cofactor. [4Fe-4S] cluster serves as cofactor.

It catalyses the reaction hydrogen sulfide + 3 NADP(+) + 3 H2O = sulfite + 3 NADPH + 4 H(+). Its pathway is sulfur metabolism; hydrogen sulfide biosynthesis; hydrogen sulfide from sulfite (NADPH route): step 1/1. In terms of biological role, component of the sulfite reductase complex that catalyzes the 6-electron reduction of sulfite to sulfide. This is one of several activities required for the biosynthesis of L-cysteine from sulfate. This Shewanella loihica (strain ATCC BAA-1088 / PV-4) protein is Sulfite reductase [NADPH] hemoprotein beta-component.